Reading from the N-terminus, the 358-residue chain is Peptide chain release factor 1 (358 aa).

Q233 carries the post-translational modification N5-methylglutamine. Residues 282–306 (QRAASERSADRRGQVGSGDRSERVR) are compositionally biased toward basic and acidic residues. The disordered stretch occupies residues 282–308 (QRAASERSADRRGQVGSGDRSERVRTY).

This sequence belongs to the prokaryotic/mitochondrial release factor family. Methylated by PrmC. Methylation increases the termination efficiency of RF1.

It localises to the cytoplasm. Functionally, peptide chain release factor 1 directs the termination of translation in response to the peptide chain termination codons UAG and UAA. The protein is Peptide chain release factor 1 of Afipia carboxidovorans (strain ATCC 49405 / DSM 1227 / KCTC 32145 / OM5) (Oligotropha carboxidovorans).